Here is a 379-residue protein sequence, read N- to C-terminus: 3-dehydroquinate synthase (379 aa).

The protein belongs to the archaeal-type DHQ synthase family.

It catalyses the reaction 2-amino-2,3,7-trideoxy-D-lyxo-hept-6-ulosonate + NAD(+) + H2O = 3-dehydroquinate + NH4(+) + NADH + H(+). Its function is as follows. Catalyzes the oxidative deamination and cyclization of 2-amino-3,7-dideoxy-D-threo-hept-6-ulosonic acid (ADH) to yield 3-dehydroquinate (DHQ), which is fed into the canonical shikimic pathway of aromatic amino acid biosynthesis. This is 3-dehydroquinate synthase from Methanococcoides burtonii (strain DSM 6242 / NBRC 107633 / OCM 468 / ACE-M).